The sequence spans 152 residues: Small ribosomal subunit protein uS15 (152 aa).

Residues 1 to 19 (MAKMHTRRKGRSRSTRPVR) show a composition bias toward basic residues. A disordered region spans residues 1 to 21 (MAKMHTRRKGRSRSTRPVRKT).

It belongs to the universal ribosomal protein uS15 family. As to quaternary structure, part of the 30S ribosomal subunit.

This is Small ribosomal subunit protein uS15 from Methanocella arvoryzae (strain DSM 22066 / NBRC 105507 / MRE50).